We begin with the raw amino-acid sequence, 488 residues long: Rhamnulokinase (488 aa).

11-15 (ASSGR) is an ATP binding site. Residues A79 and 234–236 (HDT) contribute to the substrate site. D235 functions as the Proton acceptor in the catalytic mechanism. T257 serves as a coordination point for ATP. N294 provides a ligand contact to substrate. Q302 and G401 together coordinate ATP.

It belongs to the rhamnulokinase family. Mg(2+) serves as cofactor.

The catalysed reaction is L-rhamnulose + ATP = L-rhamnulose 1-phosphate + ADP + H(+). The protein operates within carbohydrate degradation; L-rhamnose degradation; glycerone phosphate from L-rhamnose: step 2/3. In terms of biological role, involved in the catabolism of L-rhamnose (6-deoxy-L-mannose). Catalyzes the transfer of the gamma-phosphate group from ATP to the 1-hydroxyl group of L-rhamnulose to yield L-rhamnulose 1-phosphate. This is Rhamnulokinase from Lactiplantibacillus plantarum (strain ATCC BAA-793 / NCIMB 8826 / WCFS1) (Lactobacillus plantarum).